We begin with the raw amino-acid sequence, 882 residues long: Translation initiation factor IF-2 (882 aa).

The disordered stretch occupies residues serine 50–valine 299. 2 stretches are compositionally biased toward basic and acidic residues: residues serine 60–lysine 71 and arginine 84–histidine 96. The segment covering glycine 97 to lysine 108 has biased composition (basic residues). 4 stretches are compositionally biased toward basic and acidic residues: residues glutamine 109 to asparagine 133, lysine 169 to glutamate 183, glutamine 232 to lysine 242, and glutamate 250 to aspartate 263. Basic residues predominate over residues lysine 264–asparagine 277. Residues glutamine 278–leucine 294 are compositionally biased toward basic and acidic residues. In terms of domain architecture, tr-type G spans lysine 383 to lysine 552. The interval glycine 392–threonine 399 is G1. A GTP-binding site is contributed by glycine 392–threonine 399. The segment at glycine 417 to lysine 421 is G2. Residues aspartate 438 to glycine 441 are G3. GTP-binding positions include aspartate 438–histidine 442 and asparagine 492–aspartate 495. The segment at asparagine 492 to aspartate 495 is G4. The tract at residues serine 528–lysine 530 is G5.

Belongs to the TRAFAC class translation factor GTPase superfamily. Classic translation factor GTPase family. IF-2 subfamily.

The protein localises to the cytoplasm. In terms of biological role, one of the essential components for the initiation of protein synthesis. Protects formylmethionyl-tRNA from spontaneous hydrolysis and promotes its binding to the 30S ribosomal subunits. Also involved in the hydrolysis of GTP during the formation of the 70S ribosomal complex. The chain is Translation initiation factor IF-2 from Lactobacillus gasseri (strain ATCC 33323 / DSM 20243 / BCRC 14619 / CIP 102991 / JCM 1131 / KCTC 3163 / NCIMB 11718 / NCTC 13722 / AM63).